Consider the following 157-residue polypeptide: MKFTLLVVGRTVEKHYITAINDYVERTKHFISFDMEVIPELKNTKNLSMEQQKEKEGELILKALLPGDVVVLLDEHGKEFRSVEFANWIERKMHTVNKRLVFIIGGPYGFAPKIYDAAQEKISLSKMTFSHQMIRLIFVEQLYRAMTILNNGPYHHE.

S-adenosyl-L-methionine contacts are provided by residues L73, G105, and L124–F129.

This sequence belongs to the RNA methyltransferase RlmH family. Homodimer.

Its subcellular location is the cytoplasm. It carries out the reaction pseudouridine(1915) in 23S rRNA + S-adenosyl-L-methionine = N(3)-methylpseudouridine(1915) in 23S rRNA + S-adenosyl-L-homocysteine + H(+). Its function is as follows. Specifically methylates the pseudouridine at position 1915 (m3Psi1915) in 23S rRNA. The chain is Ribosomal RNA large subunit methyltransferase H from Phocaeicola vulgatus (strain ATCC 8482 / DSM 1447 / JCM 5826 / CCUG 4940 / NBRC 14291 / NCTC 11154) (Bacteroides vulgatus).